A 298-amino-acid polypeptide reads, in one-letter code: Protease HtpX homolog (298 aa).

A run of 2 helical transmembrane segments spans residues 14–34 (VVLLVVFFALLALIGASAGYL) and 39–59 (YAMGLVLALVIGVIYATSMIF). A Zn(2+)-binding site is contributed by H143. Residue E144 is part of the active site. Residue H147 participates in Zn(2+) binding. Transmembrane regions (helical) follow at residues 158–178 (IAVALASAVTVISSIGGRMLW) and 197–217 (IITLLLSLLSLLLAPLVASLI). E226 lines the Zn(2+) pocket.

Belongs to the peptidase M48B family. Zn(2+) is required as a cofactor.

The protein localises to the cell membrane. In Streptococcus pyogenes serotype M3 (strain SSI-1), this protein is Protease HtpX homolog.